We begin with the raw amino-acid sequence, 585 residues long: MKCCPASILDRFNAIKVINVMGLRLNGRSVPWLLQTRKFINITSPRYTAGRPVILNENQLIRYLPNYTNKGDEEVTRRKKLHEPNGPKFHELPLNQNILDGLSTNFAEYKNSTPLQQRIINALMKSGVSFIVRGWNGSGKSFGAMLSTLSMYFEALKFLKHNPVAGKPVQSGCQVLFIVPNDNLAAQYQFWIERLLHGITEKEELQHIYKILTLTPASLDSFQNRPPYIGITTFPNLQHCIKKNQPILKQFTSQLQLLIVDESDLVIPDHGRSRRLSSPEILADKIFLSSFIQLCKKNLRINMDDENVGGMGIHSQLHGKGSIPTMVFMSASNSKNGVNYLSRYITDQLGIIGIDRKHQWYWNLTSTPSVFHYLIKAQAEPKTTKVTLTNLPYEFVRFNNSMHSIGDNNFSYNNSEAVLQIFAQSVPRILNIEAKKSKLENNILKCVMIVLPKEFNPHSFCNQYKGFAVGNRFWQCRTLSTESLNFSTNLNNVVFVANPSEIRGLHLPSITHIFHLWSTFSGVAYQHIAGRLGAMGQTGKIFNFIIPDYYKSNDFKKTDFRRCILFMLQRVGIRPKSYEFDDEHF.

The short motif at 87–117 is the Q motif element; it reads PKFHELPLNQNILDGLSTNFAEYKNSTPLQQ. In terms of domain architecture, Helicase ATP-binding spans 121–351; the sequence is NALMKSGVSF…SRYITDQLGI (231 aa). 134–141 is a binding site for ATP; it reads GWNGSGKS. Residues 261 to 264 carry the DEAD box motif; that stretch reads DESD. The Helicase C-terminal domain maps to 390–584; sequence NLPYEFVRFN…PKSYEFDDEH (195 aa).

It belongs to the DEAD box helicase family. As to quaternary structure, component of the MRH5C complex, composed of mrh5, ppr4, mtf2, and sls1. Proteins mtf2 and sls1 form a subcomplex that serves as a scaffold to bring mrh5 and ppr4 together. The MRH5C complex associates with the small subunit of the mitochondrial ribosome.

Its subcellular location is the mitochondrion. The enzyme catalyses ATP + H2O = ADP + phosphate + H(+). Functionally, translation activation factor that as part of the MRH5C complex specifically recruits cox1 mRNA to the mitochondrial ribosome for translation initiation. This Schizosaccharomyces pombe (strain 972 / ATCC 24843) (Fission yeast) protein is Mitochondrial translation ATP-dependent RNA helicase mrh5.